The primary structure comprises 145 residues: Ribonuclease H (145 aa).

Residues 2-143 (SKKEVIIYTD…ADSLARKAII (142 aa)) form the RNase H type-1 domain. Asp-11, Glu-49, Asp-71, and Asp-135 together coordinate Mg(2+).

Belongs to the RNase H family. As to quaternary structure, monomer. It depends on Mg(2+) as a cofactor.

The protein resides in the cytoplasm. The enzyme catalyses Endonucleolytic cleavage to 5'-phosphomonoester.. Functionally, endonuclease that specifically degrades the RNA of RNA-DNA hybrids. This is Ribonuclease H from Wolbachia pipientis wMel.